A 165-amino-acid chain; its full sequence is Endoribonuclease YbeY (165 aa).

Zn(2+) contacts are provided by histidine 130, histidine 134, and histidine 140.

Belongs to the endoribonuclease YbeY family. The cofactor is Zn(2+).

Its subcellular location is the cytoplasm. Its function is as follows. Single strand-specific metallo-endoribonuclease involved in late-stage 70S ribosome quality control and in maturation of the 3' terminus of the 16S rRNA. The chain is Endoribonuclease YbeY from Streptococcus pyogenes serotype M28 (strain MGAS6180).